The following is a 203-amino-acid chain: Twist-related protein 1 (203 aa).

Residues 1 to 18 show a composition bias toward low complexity; sequence MMQDVSSSPVSPADDSLS. The segment at 1–105 is disordered; that stretch reads MMQDVSSSPV…SGGGSPQSYE (105 aa). Basic residues predominate over residues 34 to 43; that stretch reads RGGRKRRSSR. 2 stretches are compositionally biased toward gly residues: residues 46-65 and 80-100; these read AGGGAGPGGAAGGGVGGGDE and GCGGGGGSAGGGGGSSSGGGS. One can recognise a bHLH domain in the interval 109-160; that stretch reads TQRVMANVRGRQRTQSLNEAFAALRKIIPTLPSDKLSKIQTLKLAARYIDFL. The segment at 162-192 is sufficient for transactivation activity; sequence QVLQSDELDSKMASCSYVAHERLSYAFSVWR.

As to quaternary structure, efficient DNA binding requires dimerization with another bHLH protein. Homodimer or heterodimer with E proteins such as TCF3. ID1 binds preferentially to TCF3 but does not interact efficiently with TWIST1 so ID1 levels control the amount of TCF3 available to dimerize with TWIST and thus determine the type of dimer formed.

The protein resides in the nucleus. In terms of biological role, acts as a transcriptional regulator. Inhibits myogenesis by sequestrating E proteins, inhibiting trans-activation by MEF2, and inhibiting DNA-binding by MYOD1 through physical interaction. This interaction probably involves the basic domains of both proteins. Also represses expression of pro-inflammatory cytokines such as TNFA and IL1B. Regulates cranial suture patterning and fusion. Activates transcription as a heterodimer with E proteins. Regulates gene expression differentially, depending on dimer composition. Homodimers induce expression of FGFR2 and POSTN while heterodimers repress FGFR2 and POSTN expression and induce THBS1 expression. Heterodimerization is also required for osteoblast differentiation. Represses the activity of the circadian transcriptional activator: NPAS2-BMAL1 heterodimer. This is Twist-related protein 1 (TWIST1) from Callithrix jacchus (White-tufted-ear marmoset).